The chain runs to 280 residues: Protein MGF 505-3R (280 aa).

It belongs to the asfivirus MGF 505 family.

Plays a role in virus cell tropism, and may be required for efficient virus replication in macrophages. In Ornithodoros (relapsing fever ticks), this protein is Protein MGF 505-3R.